The primary structure comprises 275 residues: Hemin import ATP-binding protein HmuV (275 aa).

Positions 2-242 (LKAAGIGVRL…EWIETGFGLQ (241 aa)) constitute an ABC transporter domain. ATP is bound at residue 34–41 (GPNGAGKS).

It belongs to the ABC transporter superfamily. Heme (hemin) importer (TC 3.A.1.14.5) family. As to quaternary structure, the complex is composed of two ATP-binding proteins (HmuV), two transmembrane proteins (HmuU) and a solute-binding protein (HmuT).

It localises to the cell inner membrane. Its function is as follows. Part of the ABC transporter complex HmuTUV involved in hemin import. Responsible for energy coupling to the transport system. The sequence is that of Hemin import ATP-binding protein HmuV from Gloeobacter violaceus (strain ATCC 29082 / PCC 7421).